The sequence spans 331 residues: Phosphoenolpyruvate transferase (331 aa).

Asp63 serves as a coordination point for 7,8-didemethyl-8-hydroxy-5-deazariboflavin.

Belongs to the CofD family. Homodimer. The cofactor is Mg(2+).

It carries out the reaction enolpyruvoyl-2-diphospho-5'-guanosine + 7,8-didemethyl-8-hydroxy-5-deazariboflavin = dehydro coenzyme F420-0 + GMP + H(+). It functions in the pathway cofactor biosynthesis; coenzyme F420 biosynthesis. In terms of biological role, catalyzes the transfer of the phosphoenolpyruvate moiety from enoylpyruvoyl-2-diphospho-5'-guanosine (EPPG) to 7,8-didemethyl-8-hydroxy-5-deazariboflavin (FO) with the formation of dehydro coenzyme F420-0 and GMP. This is Phosphoenolpyruvate transferase from Mycobacterium bovis (strain ATCC BAA-935 / AF2122/97).